The primary structure comprises 349 residues: Homeobox-leucine zipper protein HOX5 (349 aa).

Positions 83–142 (APEKKRRLTAEQVQMLERSFEEENKLEPERKTELARRLGMAPRQVAVWFQNRRARWKTKQ) form a DNA-binding region, homeobox. The tract at residues 141–185 (KQLEHDFDRLKAAYDALAADHHALLSDNDRLRAQVISLTEKLQDK) is leucine-zipper. Positions 181-253 (KLQDKETSPS…GTNDDGDGGA (73 aa)) are disordered. A compositionally biased stretch (low complexity) spans 188–198 (SPSSATITTAA).

The protein belongs to the HD-ZIP homeobox family. Class I subfamily. As to quaternary structure, homodimer. May form a heterodimer with HOX4. As to expression, expressed in seedlings, roots, leaves, nodes, internodes, flowers and embryo.

It localises to the nucleus. Probable transcription activator that binds to the DNA sequence 5'-CAAT[AT]ATTG-3'. This is Homeobox-leucine zipper protein HOX5 (HOX5) from Oryza sativa subsp. japonica (Rice).